A 1154-amino-acid polypeptide reads, in one-letter code: DNA-directed RNA polymerase subunit beta (1154 aa).

A compositionally biased stretch (basic and acidic residues) spans 1108-1123; the sequence is ELGIDIQGEDRSERAG. A disordered region spans residues 1108 to 1136; it reads ELGIDIQGEDRSERAGEPASPDEMDDEEE. Over residues 1127 to 1136 the composition is skewed to acidic residues; sequence SPDEMDDEEE.

Belongs to the RNA polymerase beta chain family. The RNAP catalytic core consists of 2 alpha, 1 beta, 1 beta' and 1 omega subunit. When a sigma factor is associated with the core the holoenzyme is formed, which can initiate transcription.

It catalyses the reaction RNA(n) + a ribonucleoside 5'-triphosphate = RNA(n+1) + diphosphate. Functionally, DNA-dependent RNA polymerase catalyzes the transcription of DNA into RNA using the four ribonucleoside triphosphates as substrates. This is DNA-directed RNA polymerase subunit beta from Heliobacterium modesticaldum (strain ATCC 51547 / Ice1).